The sequence spans 180 residues: MGLTISSLLTRLFGKKQMRILMVGLDAAGKTTILYKLKLGEIVTTIPTIGFNVETVEYKNICFTVWDVGGQDKIRPLWRHYFQNTQGLIFVVDSNDRDRITEAERELQNMLQEDELRDAVLLVFANKQDLPNAMTAAELTDKLRLNQLRNRHWFIQSTCATQGHGLYEGLDWLSAELAKK.

A lipid anchor (N-myristoyl glycine) is attached at Gly-2. Residues 24 to 31 (GLDAAGKT), 67 to 71 (DVGGQ), and 126 to 129 (NKQD) contribute to the GTP site.

It belongs to the small GTPase superfamily. Arf family. Uniformly distributed throughout adults.

The protein localises to the golgi apparatus. Functionally, GTP-binding protein involved in protein trafficking; may modulate vesicle budding and uncoating within the Golgi apparatus. This chain is ADP ribosylation factor 4, found in Drosophila melanogaster (Fruit fly).